The sequence spans 165 residues: Lipoprotein signal peptidase (165 aa).

The next 3 helical transmembrane spans lie at 9–29, 69–89, and 98–118; these read FLAIACFVLIDWVTKLAVLLY, KYFLFFIRITIILGILAFLFL, and IRFSLILLCSGAIGNVGDIVF. Residues D124 and D142 contribute to the active site. The helical transmembrane segment at 133–153 threads the bilayer; the sequence is WFFPTFNFADIFISLGTLIFI.

This sequence belongs to the peptidase A8 family.

The protein resides in the cell inner membrane. The catalysed reaction is Release of signal peptides from bacterial membrane prolipoproteins. Hydrolyzes -Xaa-Yaa-Zaa-|-(S,diacylglyceryl)Cys-, in which Xaa is hydrophobic (preferably Leu), and Yaa (Ala or Ser) and Zaa (Gly or Ala) have small, neutral side chains.. It participates in protein modification; lipoprotein biosynthesis (signal peptide cleavage). Functionally, this protein specifically catalyzes the removal of signal peptides from prolipoproteins. In Chlamydia abortus (strain DSM 27085 / S26/3) (Chlamydophila abortus), this protein is Lipoprotein signal peptidase.